The primary structure comprises 527 residues: Bifunctional purine biosynthesis protein PurH (527 aa).

The MGS-like domain occupies 1-149; that stretch reads MASDFLPVRR…KNFARVAVAA (149 aa).

This sequence belongs to the PurH family.

It carries out the reaction (6R)-10-formyltetrahydrofolate + 5-amino-1-(5-phospho-beta-D-ribosyl)imidazole-4-carboxamide = 5-formamido-1-(5-phospho-D-ribosyl)imidazole-4-carboxamide + (6S)-5,6,7,8-tetrahydrofolate. It catalyses the reaction IMP + H2O = 5-formamido-1-(5-phospho-D-ribosyl)imidazole-4-carboxamide. Its pathway is purine metabolism; IMP biosynthesis via de novo pathway; 5-formamido-1-(5-phospho-D-ribosyl)imidazole-4-carboxamide from 5-amino-1-(5-phospho-D-ribosyl)imidazole-4-carboxamide (10-formyl THF route): step 1/1. It functions in the pathway purine metabolism; IMP biosynthesis via de novo pathway; IMP from 5-formamido-1-(5-phospho-D-ribosyl)imidazole-4-carboxamide: step 1/1. The protein is Bifunctional purine biosynthesis protein PurH of Xanthomonas axonopodis pv. citri (strain 306).